The chain runs to 452 residues: ADP-dependent glucose/glucosamine kinase (452 aa).

One can recognise an ADPK domain in the interval 1 to 452; it reads MSWDEMYRDA…AFVSEFSLSS (452 aa). Residues aspartate 33, glutamate 87, 111-112, and histidine 174 contribute to the D-glucose site; that span reads GQ. Glutamate 264 is a Mg(2+) binding site. Residue asparagine 290 coordinates ADP. Position 293 (glutamate 293) interacts with Mg(2+). ADP-binding positions include 339–340, valine 426, and glycine 436; that span reads HT. Residue aspartate 437 participates in D-glucose binding. Aspartate 437 is a Mg(2+) binding site. The active-site Proton acceptor is the aspartate 437.

Belongs to the ADP-dependent glucokinase family. The cofactor is Mg(2+).

Its subcellular location is the cytoplasm. It carries out the reaction D-glucose + ADP = D-glucose 6-phosphate + AMP + H(+). The enzyme catalyses D-glucosamine + ADP = D-glucosamine 6-phosphate + AMP + H(+). Its pathway is carbohydrate degradation; glycolysis. Its function is as follows. Catalyzes the ADP-dependent phosphorylation of D-glucose to D-glucose 6-phosphate and glucosamine to glucosamine 6-phosphate. This chain is ADP-dependent glucose/glucosamine kinase, found in Pyrococcus abyssi (strain GE5 / Orsay).